The primary structure comprises 264 residues: Apolipoprotein A-I (264 aa).

The first 18 residues, 1–18 (MKAVLLVVAALFLAGSQA), serve as a signal peptide directing secretion. Tandem repeats lie at residues 67 to 88 (LRLS…ADFG) and 89 to 110 (LATQ…QIVS). The interval 67 to 264 (LRLSDNWDTL…DQASKQLAAQ (198 aa)) is 10 X approximate tandem repeats. Residues 111–121 (EDLQDVKHKVQ) form a 3; half-length repeat. A run of 3 repeats spans residues 122 to 143 (PYLE…EKVR), 144 to 165 (PLGI…EKLT), and 166 to 187 (PLGE…TQLA). The 7; truncated repeat unit spans residues 188 to 207 (PFSEEMRQRLAKRLEELKDS). Met193 bears the Methionine sulfoxide mark. Repeat unit 8 spans residues 208–229 (ATLADYHAKASEHLKMLGEKAK). A 9; half-length repeat occupies 230–240 (PALEDLRQGLL). The stretch at 241-264 (PVLENLKASILSSIDQASKQLAAQ) is repeat 10.

Belongs to the apolipoprotein A1/A4/E family. Homodimer. Interacts with APOA1BP and CLU. Component of a sperm activating protein complex (SPAP), consisting of APOA1, an immunoglobulin heavy chain, an immunoglobulin light chain and albumin. Interacts with NDRG1. Interacts with SCGB3A2. Interacts with NAXE and YJEFN3. Post-translationally, glycosylated. In terms of processing, palmitoylated. Phosphorylation sites are present in the extracellular medium.

It is found in the secreted. Its function is as follows. Participates in the reverse transport of cholesterol from tissues to the liver for excretion by promoting cholesterol efflux from tissues and by acting as a cofactor for the lecithin cholesterol acyltransferase (LCAT). As part of the SPAP complex, activates spermatozoa motility. The sequence is that of Apolipoprotein A-I (APOA1) from Cavia aperea (Brazilian guinea pig).